The chain runs to 171 residues: 3-hydroxydecanoyl-[acyl-carrier-protein] dehydratase (171 aa).

His71 is a catalytic residue.

The protein belongs to the thioester dehydratase family. FabA subfamily. In terms of assembly, homodimer.

Its subcellular location is the cytoplasm. It catalyses the reaction a (3R)-hydroxyacyl-[ACP] = a (2E)-enoyl-[ACP] + H2O. The catalysed reaction is (3R)-hydroxydecanoyl-[ACP] = (2E)-decenoyl-[ACP] + H2O. The enzyme catalyses (2E)-decenoyl-[ACP] = (3Z)-decenoyl-[ACP]. Its pathway is lipid metabolism; fatty acid biosynthesis. Its function is as follows. Necessary for the introduction of cis unsaturation into fatty acids. Catalyzes the dehydration of (3R)-3-hydroxydecanoyl-ACP to E-(2)-decenoyl-ACP and then its isomerization to Z-(3)-decenoyl-ACP. Can catalyze the dehydratase reaction for beta-hydroxyacyl-ACPs with saturated chain lengths up to 16:0, being most active on intermediate chain length. This is 3-hydroxydecanoyl-[acyl-carrier-protein] dehydratase from Rhizobium meliloti (strain 1021) (Ensifer meliloti).